The following is a 365-amino-acid chain: 3-dehydroquinate synthase (365 aa).

Residues 106 to 110 (GVIGD), 130 to 131 (TT), Lys142, Lys151, and 169 to 172 (FFAT) contribute to the NAD(+) site. Zn(2+) contacts are provided by Glu184, His247, and His264.

Belongs to the sugar phosphate cyclases superfamily. Dehydroquinate synthase family. It depends on NAD(+) as a cofactor. Requires Co(2+) as cofactor. Zn(2+) serves as cofactor.

It localises to the cytoplasm. It catalyses the reaction 7-phospho-2-dehydro-3-deoxy-D-arabino-heptonate = 3-dehydroquinate + phosphate. Its pathway is metabolic intermediate biosynthesis; chorismate biosynthesis; chorismate from D-erythrose 4-phosphate and phosphoenolpyruvate: step 2/7. Its function is as follows. Catalyzes the conversion of 3-deoxy-D-arabino-heptulosonate 7-phosphate (DAHP) to dehydroquinate (DHQ). The polypeptide is 3-dehydroquinate synthase (Listeria innocua serovar 6a (strain ATCC BAA-680 / CLIP 11262)).